The sequence spans 442 residues: METHLYYDTLYQYQGGVYPAHICLPTDVCLPMRVDCIESLYFRCVFFKSGMHYTEWSKLKFTVISREIKFKDVLKDADSDEVFTGLVVMTIPIPIVDFHFDIDSVILKLVYPRLVHREIVLRLYDLICVRPPSNRPSEASAKNIANDFYQLTSRENKQTPDEEKRCLFFQQGPLEPPSTVRGLKAPGNEKPIQFPAHANEKMTESFLSDSWFGQKVRCKKILDFTQTYQVVVCWYELSFSREMQIENNLLSASQLKRVNAADFWDRTNRYLRDIGSRVLTHIVKTLQIHNRQFKQKFNCNFPDNFSFDRLLSFMQLGKDFWILNLTLDSCIIKAIICFLGFQNGGKSFLAQDEVWGDLIDCSKGSVIYGEKIQWILDSTNNLYSTCREKQNKSWELYVDCCALYVSEKLELDFVLPGGFAITGKFALTDGDIDFFNWRFGLS.

The protein belongs to the herpesviridae CVC1 protein family. In terms of assembly, interacts (via C-terminus) with capsid vertex component 2/CVC2.

Its subcellular location is the virion. It localises to the host nucleus. In terms of biological role, capsid vertex-specific component that plays a role during viral DNA encapsidation, assuring correct genome cleavage and presumably stabilizing capsids that contain full-length viral genomes. The protein is Capsid vertex component 1 of Human herpesvirus 6A (strain Uganda-1102) (HHV-6 variant A).